A 509-amino-acid chain; its full sequence is 2-isopropylmalate synthase (509 aa).

Residues 5 to 267 (IQIFDTTLRD…QTALNLEETK (263 aa)) form the Pyruvate carboxyltransferase domain. Mn(2+) contacts are provided by aspartate 14, histidine 202, histidine 204, and asparagine 238. The tract at residues 391-509 (KLETLQLQYV…AAENVEKVGN (119 aa)) is regulatory domain.

This sequence belongs to the alpha-IPM synthase/homocitrate synthase family. LeuA type 1 subfamily. In terms of assembly, homodimer. Mn(2+) serves as cofactor.

It is found in the cytoplasm. It carries out the reaction 3-methyl-2-oxobutanoate + acetyl-CoA + H2O = (2S)-2-isopropylmalate + CoA + H(+). The protein operates within amino-acid biosynthesis; L-leucine biosynthesis; L-leucine from 3-methyl-2-oxobutanoate: step 1/4. Its function is as follows. Catalyzes the condensation of the acetyl group of acetyl-CoA with 3-methyl-2-oxobutanoate (2-ketoisovalerate) to form 3-carboxy-3-hydroxy-4-methylpentanoate (2-isopropylmalate). The protein is 2-isopropylmalate synthase of Staphylococcus aureus (strain Mu3 / ATCC 700698).